The sequence spans 780 residues: MENRFQNDTLFSEWFGQSLSDVRFPDNVTVYSQADSAVSFENVRQPIKLVRAAMGSGKTTALIHFLKQVPRELSVLLISCRKTFAAEILHRFTLNGLKDFELYCDITERQINNRKVIVQIESLHRLTENYDVLILDEIMSIIKQFYSKTMTKTKEVDCKFLSLIKNSSHVIAMDATLTRHVVEFFAAFKPDTQIALIRNTFVSAMFSNRIAYFCDTFFGKEFSFFARLEDKLRWDKKLCLFCSTVLAAEYMYDLIRSRFPLKKVLLLTSKQGKCSSIESWIRYDVVIYTSVVTVGLSFEPVYFSSLFVYIQLAKGGPDMVSVFQSIGRVRRVIDEDIYIYMNPVLIRSYDPLAPIAIPPCSDWSVAEQSIISESCIDFRGKCSGAHKYNFCSVLKSLFRYRHYIEKTTITSLSDSLFLLCSLLCENSIKVDIVGNGFPMRKEVFLSFLQILVEECHFIEKKITLPGDDMTFQEIISSRETIMNGDFYENGDQLLHKDYITDMGKFRATFLSPGVDIFIASDIVYDLKNESKRYVFVNVWLQKCVSAGVESTEIERVFCERIKCYMLPKSFLCDEYFVLGDISGVYEWGMLIDLAFLAEMIRKDLKLKSCTDTTTDISEDDLLLCAARRSSDILQIMQLVFTVHVQFFQKYSLQTLQLFNKLRGMRIVTGVFSIEKFSISILRLFFKCAFNMTLSASRPRYIPGKAYRNLTKNDMENMLDNWEISRTNLKTCKELRKALTEASRARRKQTIYKLQGSDISLSVSEVGVFGQHASPGVCVSS.

A Helicase ATP-binding domain is found at 39–195; it reads SFENVRQPIK…AAFKPDTQIA (157 aa). An ATP-binding site is contributed by 52-59; that stretch reads AAMGSGKT.

This sequence belongs to the herpesviridae OriBP family.

In terms of biological role, probably involved in DNA replication. Binds the origin of replication (ori). This Human herpesvirus 6A (strain Uganda-1102) (HHV-6 variant A) protein is Replication origin-binding protein (U73).